A 331-amino-acid chain; its full sequence is Glyceraldehyde-3-phosphate dehydrogenase 2 (331 aa).

NAD(+)-binding positions include 11-12 (RI), Asp33, and Arg78. Residues 148–150 (SCT), Thr179, 208–209 (TG), and Arg231 each bind D-glyceraldehyde 3-phosphate. Cys149 acts as the Nucleophile in catalysis. Asn313 is a binding site for NAD(+).

This sequence belongs to the glyceraldehyde-3-phosphate dehydrogenase family. In terms of assembly, homotetramer.

The protein localises to the cytoplasm. It catalyses the reaction D-glyceraldehyde 3-phosphate + phosphate + NAD(+) = (2R)-3-phospho-glyceroyl phosphate + NADH + H(+). Its pathway is carbohydrate degradation; glycolysis; pyruvate from D-glyceraldehyde 3-phosphate: step 1/5. The protein is Glyceraldehyde-3-phosphate dehydrogenase 2 (GAP2) of Kluyveromyces marxianus (Yeast).